The following is a 175-amino-acid chain: Pituitary adenylate cyclase-activating polypeptide (175 aa).

The first 24 residues, 1-24, serve as a signal peptide directing secretion; it reads MTMCSGARLALLVYGIIMHSSVSC. Positions 25 to 78 are excised as a propeptide; sequence SPAAGLSFPGIRPEDEAYDQDGNPLQDFYDWDPPGVGSPASALRDAYALYYPAD. The important for receptor binding stretch occupies residues 149-157; it reads VKKYLAAVL. Residue leucine 157 is modified to Leucine amide. Lysine 168 is subject to Lysine amide. A propeptide spanning residues 172 to 175 is cleaved from the precursor; that stretch reads IAYL.

Belongs to the glucagon family.

The protein localises to the secreted. PACAP is a neuropeptide involved in diverse array of physiological processes through activating the PACAP subfamily of class B1 G protein-coupled receptors: VIP receptor 1 (VIPR1), VIP receptor 2 (VIPR2), and PACAP type I receptor (ADCYAP1R1). Exerts neuroprotective and general cytoprotective effects due to anti-apoptotic, anti-inflammatory, and antioxidant actions. Promotes neuron projection development through the RAPGEF2/Rap1/B-Raf/ERK pathway. In chromaffin cells, induces long-lasting increase of intracellular calcium concentrations and neuroendocrine secretion. Involved in the control of glucose homeostasis, induces insulin secretion by pancreatic beta cells. PACAP exists in two bioactive forms from proteolysis of the same precursor protein, PACAP27 and PACAP38, which differ by eleven amino acid residues in the C-terminus. This Mus musculus (Mouse) protein is Pituitary adenylate cyclase-activating polypeptide.